Consider the following 171-residue polypeptide: NADH-quinone oxidoreductase subunit I (171 aa).

4Fe-4S ferredoxin-type domains follow at residues 41–71 and 81–110; these read LTRD…VVKT and ESFT…LTPD. [4Fe-4S] cluster is bound by residues Cys-51, Cys-54, Cys-57, Cys-61, Cys-90, Cys-93, Cys-96, and Cys-100.

It belongs to the complex I 23 kDa subunit family. In terms of assembly, NDH-1 is composed of 13 different subunits. Subunits NuoA, H, J, K, L, M, N constitute the membrane sector of the complex. It depends on [4Fe-4S] cluster as a cofactor.

Its subcellular location is the cell inner membrane. It catalyses the reaction a quinone + NADH + 5 H(+)(in) = a quinol + NAD(+) + 4 H(+)(out). In terms of biological role, NDH-1 shuttles electrons from NADH, via FMN and iron-sulfur (Fe-S) centers, to quinones in the respiratory chain. The immediate electron acceptor for the enzyme in this species is believed to be ubiquinone. Couples the redox reaction to proton translocation (for every two electrons transferred, four hydrogen ions are translocated across the cytoplasmic membrane), and thus conserves the redox energy in a proton gradient. The chain is NADH-quinone oxidoreductase subunit I from Shewanella woodyi (strain ATCC 51908 / MS32).